Reading from the N-terminus, the 392-residue chain is Digeranylgeranylglycerophospholipid reductase (392 aa).

G15, E34, C45, A46, G48, R99, A123, D279, G291, and I292 together coordinate FAD. Residue V370 participates in a 2,3-bis-O-(geranylgeranyl)-sn-glycerol 1-phospholipid binding.

Belongs to the geranylgeranyl reductase family. DGGGPL reductase subfamily. The cofactor is FAD.

The enzyme catalyses a 2,3-bis-O-phytanyl-sn-glycerol 1-phospholipid + 8 oxidized 2[4Fe-4S]-[ferredoxin] = a 2,3-bis-O-(geranylgeranyl)-sn-glycerol 1-phospholipid + 8 reduced 2[4Fe-4S]-[ferredoxin] + 16 H(+). It catalyses the reaction 2,3-bis-O-(phytanyl)-sn-glycerol 1-phosphate + 8 oxidized 2[4Fe-4S]-[ferredoxin] = 2,3-bis-O-(geranylgeranyl)-sn-glycerol 1-phosphate + 8 reduced 2[4Fe-4S]-[ferredoxin] + 16 H(+). The catalysed reaction is a 2,3-bis-O-phytanyl-sn-glycerol 1-phospholipid + 8 A = a 2,3-bis-O-(geranylgeranyl)-sn-glycerol 1-phospholipid + 8 AH2. It carries out the reaction CDP-2,3-bis-O-(geranylgeranyl)-sn-glycerol + 8 AH2 = CDP-2,3-bis-O-(phytanyl)-sn-glycerol + 8 A. The enzyme catalyses archaetidylserine + 8 AH2 = 2,3-bis-O-phytanyl-sn-glycero-3-phospho-L-serine + 8 A. It participates in membrane lipid metabolism; glycerophospholipid metabolism. Is involved in the reduction of 2,3-digeranylgeranylglycerophospholipids (unsaturated archaeols) into 2,3-diphytanylglycerophospholipids (saturated archaeols) in the biosynthesis of archaeal membrane lipids. Catalyzes the formation of archaetidic acid (2,3-di-O-phytanyl-sn-glyceryl phosphate) from 2,3-di-O-geranylgeranylglyceryl phosphate (DGGGP) via the hydrogenation of each double bond of the isoprenoid chains. Is also probably able to reduce double bonds of geranyl groups in CDP-2,3-bis-O-(geranylgeranyl)-sn-glycerol and archaetidylserine, thus acting at various stages in the biosynthesis of archaeal membrane lipids. This chain is Digeranylgeranylglycerophospholipid reductase, found in Methanocella arvoryzae (strain DSM 22066 / NBRC 105507 / MRE50).